The primary structure comprises 312 residues: Zygote arrest protein 1.L (312 aa).

Disordered stretches follow at residues 79-133 (RDVG…VRFP) and 150-205 (FQDK…DQTR). 2 stretches are compositionally biased toward polar residues: residues 86-95 (NPRQDASVQC) and 113-128 (PQQSPPEQGSPASPTK). The segment covering 152–196 (DKGENLSEKTEALRSEGSRGEGGRPEGKQEDGEIKEQTKMDKADQ) has biased composition (basic and acidic residues). A 3CxxC-type zinc finger spans residues 214-297 (KYGYYHCKDC…RQDLCGRCKG (84 aa)).

The protein belongs to the ZAR1 family. In terms of tissue distribution, ovary.

The protein resides in the cytoplasm. The protein localises to the cytoplasmic ribonucleoprotein granule. Its function is as follows. mRNA-binding protein required for maternal mRNA storage, translation and degradation during oocyte maturation. Probably promotes formation of some phase-separated membraneless compartment that stores maternal mRNAs in oocytes: acts by undergoing liquid-liquid phase separation upon binding to maternal mRNAs. Binds to the 3'-UTR of maternal mRNAs in immature oocytes, inhibiting their translation. This is Zygote arrest protein 1.L from Xenopus laevis (African clawed frog).